A 251-amino-acid polypeptide reads, in one-letter code: Triosephosphate isomerase (251 aa).

9-11 (NWK) contributes to the substrate binding site. The active-site Electrophile is histidine 94. The Proton acceptor role is filled by glutamate 166. Substrate-binding positions include glycine 172, serine 211, and 232-233 (GG).

This sequence belongs to the triosephosphate isomerase family. Homodimer.

It localises to the cytoplasm. The catalysed reaction is D-glyceraldehyde 3-phosphate = dihydroxyacetone phosphate. Its pathway is carbohydrate biosynthesis; gluconeogenesis. It participates in carbohydrate degradation; glycolysis; D-glyceraldehyde 3-phosphate from glycerone phosphate: step 1/1. Its function is as follows. Involved in the gluconeogenesis. Catalyzes stereospecifically the conversion of dihydroxyacetone phosphate (DHAP) to D-glyceraldehyde-3-phosphate (G3P). This is Triosephosphate isomerase from Xanthomonas axonopodis pv. citri (strain 306).